We begin with the raw amino-acid sequence, 303 residues long: MLKSSKHEDSSSKKNQNNKLIFIVRQLFYLIKHFFSKTKTPDNFFGIIKRLKINSQKMSLDEFNILANLLKLEDKIVEDIMVPRSDIIAIKLTTNLEELSESIKIAVPHTRTLIYDGTLDNVVGFIHIKDLFKALATKQNSPLKRLIRKHIIAAPSMKLLDLLAKMRRERTHIAIVVDEYGGTDGLVTIEDLIEEIVGRIDDEHDQQLDSANFKVINNSTIIANARIEVELLEEIIGEKLKNDDDEFDTIGGLVLTRVSSVPAIGTRIDISENIEIEVTDATPRSLKQVKIRLKNGLNSDNLT.

CBS domains lie at M81–L143 and L146–E203.

It belongs to the UPF0053 family. Hemolysin C subfamily.

The sequence is that of Hemolysin C (tlyC) from Rickettsia prowazekii (strain Madrid E).